Consider the following 819-residue polypeptide: Mitosis inhibitor protein kinase SWE1 (819 aa).

Phosphoserine; by CDC5 is present on serine 36. Residue threonine 45 is modified to Phosphothreonine; by CDC28. Residues serine 56 and serine 63 each carry the phosphoserine; by CDC28 modification. Serine 70 bears the Phosphoserine mark. Threonine 74 bears the Phosphothreonine; by CDC28 mark. Positions 86 to 105 (KIEEEEEEEEEGKDEESVDS) are disordered. Residues 88 to 102 (EEEEEEEEEGKDEES) show a composition bias toward acidic residues. Serine 102 carries the phosphoserine; by CDC5 modification. The residue at position 105 (serine 105) is a Phosphoserine; by CDC28. At serine 111 the chain carries Phosphoserine; by CDC5, CDC28 and CLA4. Residues 117–168 (ESVTTPITKRSAEKTNSPISLKQWNQRWFPKNDARTENTSSSSSYSVAKPNQ) form a disordered region. The residue at position 118 (serine 118) is a Phosphoserine; by CDC5. A compositionally biased stretch (polar residues) spans 118–142 (SVTTPITKRSAEKTNSPISLKQWNQ). A phosphothreonine; by CDC28 mark is found at threonine 121 and threonine 124. Serine 127 is subject to Phosphoserine; by CDC28. Position 131 is a phosphothreonine; by CDC5 (threonine 131). Serine 133 carries the phosphoserine; by CDC28 modification. A Phosphoserine; by CDC28 and CLA4 modification is found at serine 136. 2 positions are modified to phosphoserine; by CDC5: serine 156 and serine 169. Threonine 196 carries the post-translational modification Phosphothreonine; by CDC28. Serine 201 carries the post-translational modification Phosphoserine; by CDC28. A phosphoserine; by CDC5 mark is found at serine 225 and serine 254. Residue serine 262 is modified to Phosphoserine. Residues serine 263 and serine 266 each carry the phosphoserine; by CDC28 modification. The interval 278 to 297 (NQTNILSPTNSLVTNSSPQT) is disordered. Position 280 is a phosphothreonine; by CDC5 (threonine 280). A phosphoserine mark is found at serine 284 and serine 294. A Phosphoserine; by CLA4 modification is found at serine 312. The interval 341–395 (PIIISSHHSTRKNPQPYQFRGRYDNDTDEEISTPTRRKSIIGATSQTHRESRPLS) is disordered. Serine 345 bears the Phosphoserine mark. 2 positions are modified to phosphothreonine; by CDC28: threonine 367 and threonine 373. At serine 379 the chain carries Phosphoserine; by CDC5 and CLA4. Threonine 384 is subject to Phosphothreonine; by CDC28. Residues serine 395 and serine 438 each carry the phosphoserine; by CDC5 and CLA4 modification. A Protein kinase domain is found at 444-794 (FTNVHSIGKG…NQILQTEECL (351 aa)). Residues 450-458 (IGKGQFSTV) and lysine 473 contribute to the ATP site. Aspartate 579 functions as the Proton acceptor in the catalytic mechanism. Residues asparagine 584 and aspartate 597 each coordinate Mg(2+). Position 610 is a phosphoserine; by CDC5 (serine 610). At threonine 629 the chain carries Phosphothreonine; by CDC5. Threonine 688 bears the Phosphothreonine; by CDC5 and CLA4 mark. Residue threonine 692 is modified to Phosphothreonine. Polar residues predominate over residues 707–716 (SNNAGTSTVH). Positions 707-736 (SNNAGTSTVHNNSNINNPNMNNGNDNNNVN) are disordered. The span at 717–736 (NNSNINNPNMNNGNDNNNVN) shows a compositional bias: low complexity. Lysine 741 participates in a covalent cross-link: Glycyl lysine isopeptide (Lys-Gly) (interchain with G-Cter in ubiquitin).

This sequence belongs to the protein kinase superfamily. Ser/Thr protein kinase family. WEE1 subfamily. Interacts with CLB2-CDC28. Partial hyperphosphorylation of SWE1 by CLB2-CDC28 stabilizes the ternary complex of SWE1 and CLB2-CDC28 and stimulates kinase activity of SWE1 in a positive feedback loop, maintaining CLB2-CDC28 in the tyrosine-phosphorylated state. Fully hyperphosphorylated SWE1 dissociates from CLB2-CDC28. Interacts with HSL7, KCC4 and MET30. Post-translationally, ubiquitinated by the SCF(MET30) complex, leading to its degradation by the proteasome. In terms of processing, phosphorylated progressively by CLA4, CLB2-CDC28 and CDC5. CLA4-dependent phosphorylation occurs in late S phase, followed by phosphorylation by CLB2-CDC28 in early G2, when the levels of mitotic CLB2 increases. This phosphorylation is critical for triggering subsequent SWE1-CDC5 interaction and CDC5-dependent phosphorylation. The resulting cumulative hyperphosphorylation down-regulates SWE1 by targeting it for ubiquitin-mediated degradation. This stepwise phosphorylation is thought to be a mechanism to integrate the different checkpoint requirements before entry into mitosis.

Its subcellular location is the bud neck. The protein localises to the nucleus. The enzyme catalyses L-seryl-[protein] + ATP = O-phospho-L-seryl-[protein] + ADP + H(+). It catalyses the reaction L-threonyl-[protein] + ATP = O-phospho-L-threonyl-[protein] + ADP + H(+). Protein kinase that acts as a negative regulator of entry into mitosis (G2 to M transition) by phosphorylating and inhibiting the mitosis-promoting cyclin B-bound CDC28 at 'Tyr-19'. SWE1-mediated inhibition of CDC28 acts in a cell size or morphogenesis checkpoint to delay mitosis in response to defects in growth, actin organization or bud formation. Inhibits the activity of B-type cyclins in replication initiation strongly for CLB2, moderately for CLB3 and CLB4, and there is no apparent inhibition for CLB5 and CLB6, correlating with the normal expression timing of those cyclins. Hyperphosphorylation and degradation of SWE1 when all checkpoint requirement are met releases CLB2-CDC28 from inhibition and allows for progression through the cell cycle. SWE1-dependent CDC28 phosphorylation is also required for pachytene arrest upon activation of the recombination checkpoint during meiosis. Also involved in the regulation of nitrogen starvation- and short chain alcohol-induced filamentous growth, or filamentous differentiation in response to slowed DNA synthesis. Can act both on serines and on tyrosines. The sequence is that of Mitosis inhibitor protein kinase SWE1 (SWE1) from Saccharomyces cerevisiae (strain ATCC 204508 / S288c) (Baker's yeast).